A 405-amino-acid chain; its full sequence is 3-hydroxy-3-methylglutaryl-coenzyme A reductase (405 aa).

Residues Glu-100 and Asp-310 each act as charge relay system in the active site. The active-site Proton donor is His-400.

Belongs to the HMG-CoA reductase family.

The enzyme catalyses (R)-mevalonate + 2 NADP(+) + CoA = (3S)-3-hydroxy-3-methylglutaryl-CoA + 2 NADPH + 2 H(+). It functions in the pathway metabolic intermediate biosynthesis; (R)-mevalonate biosynthesis; (R)-mevalonate from acetyl-CoA: step 3/3. Converts HMG-CoA to mevalonate. This chain is 3-hydroxy-3-methylglutaryl-coenzyme A reductase (hmgA), found in Methanocaldococcus jannaschii (strain ATCC 43067 / DSM 2661 / JAL-1 / JCM 10045 / NBRC 100440) (Methanococcus jannaschii).